Consider the following 478-residue polypeptide: tRNA modification GTPase MnmE (478 aa).

(6S)-5-formyl-5,6,7,8-tetrahydrofolate contacts are provided by R36, E94, and K133. In terms of domain architecture, TrmE-type G spans G230–G402. N240 is a K(+) binding site. Residues N240–S245, T259–T265, and D284–G287 contribute to the GTP site. S244 contacts Mg(2+). T259, V261, and T264 together coordinate K(+). T265 is a Mg(2+) binding site. Residue K478 participates in (6S)-5-formyl-5,6,7,8-tetrahydrofolate binding.

This sequence belongs to the TRAFAC class TrmE-Era-EngA-EngB-Septin-like GTPase superfamily. TrmE GTPase family. In terms of assembly, homodimer. Heterotetramer of two MnmE and two MnmG subunits. K(+) is required as a cofactor.

It is found in the cytoplasm. In terms of biological role, exhibits a very high intrinsic GTPase hydrolysis rate. Involved in the addition of a carboxymethylaminomethyl (cmnm) group at the wobble position (U34) of certain tRNAs, forming tRNA-cmnm(5)s(2)U34. This chain is tRNA modification GTPase MnmE, found in Psychrobacter cryohalolentis (strain ATCC BAA-1226 / DSM 17306 / VKM B-2378 / K5).